The primary structure comprises 473 residues: GTPase Der (473 aa).

EngA-type G domains follow at residues Pro-5–Val-170 and Leu-178–Met-351. Residues Gly-11–Ser-18, Asp-58–Ile-62, Asn-123–Asp-126, Gly-184–Ser-191, Asp-231–Val-235, and Asn-296–Asp-299 contribute to the GTP site. The KH-like domain maps to Phe-352–Thr-436. Residues Pro-438 to Lys-473 are disordered. Residues Gln-459–Lys-473 are compositionally biased toward basic residues.

Belongs to the TRAFAC class TrmE-Era-EngA-EngB-Septin-like GTPase superfamily. EngA (Der) GTPase family. In terms of assembly, associates with the 50S ribosomal subunit.

In terms of biological role, GTPase that plays an essential role in the late steps of ribosome biogenesis. This Psychrobacter sp. (strain PRwf-1) protein is GTPase Der.